The chain runs to 142 residues: Transcription antitermination protein NusB (142 aa).

This sequence belongs to the NusB family.

Involved in transcription antitermination. Required for transcription of ribosomal RNA (rRNA) genes. Binds specifically to the boxA antiterminator sequence of the ribosomal RNA (rrn) operons. The protein is Transcription antitermination protein NusB of Anaeromyxobacter dehalogenans (strain 2CP-1 / ATCC BAA-258).